The following is a 238-amino-acid chain: MHVISETLAYGHVPAFIMGSTLVRPSLNATAEENPASETRCLLRVLAGRTVDLPGGGTLHITCTKTYVIIGKYSKPGERLSLARLIGRAMTPGGARTFIILAMKEKRSTTLGYECGTGLHLLAPSMGTFLRTHGLSNRDLCLWRGNIYDMHMQRLMFWENIAQNTTETPCITSTLTCNLTEDSGEAALTTSDRPTLPTLTAQGRPTVSNIRGILKGSPRQQPVCHRVRFAEPTEGVLM.

Belongs to the varicellovirus ORF2 protein family. Phosphorylated by host.

It localises to the host membrane. In Varicella-zoster virus (strain Dumas) (HHV-3), this protein is Membrane protein 2.